The sequence spans 72 residues: Translation initiation factor IF-1 (72 aa).

The 72-residue stretch at 1–72 (MAKEDCIEME…SKGRIIYRAR (72 aa)) folds into the S1-like domain.

This sequence belongs to the IF-1 family. In terms of assembly, component of the 30S ribosomal translation pre-initiation complex which assembles on the 30S ribosome in the order IF-2 and IF-3, IF-1 and N-formylmethionyl-tRNA(fMet); mRNA recruitment can occur at any time during PIC assembly.

It localises to the cytoplasm. In terms of biological role, one of the essential components for the initiation of protein synthesis. Stabilizes the binding of IF-2 and IF-3 on the 30S subunit to which N-formylmethionyl-tRNA(fMet) subsequently binds. Helps modulate mRNA selection, yielding the 30S pre-initiation complex (PIC). Upon addition of the 50S ribosomal subunit IF-1, IF-2 and IF-3 are released leaving the mature 70S translation initiation complex. The polypeptide is Translation initiation factor IF-1 (Pseudoalteromonas atlantica (strain T6c / ATCC BAA-1087)).